The primary structure comprises 621 residues: Bifunctional protein GlmU (621 aa).

The segment at methionine 1–arginine 229 is pyrophosphorylase. Residues leucine 11–glycine 14, lysine 25, glutamine 76, and glycine 81–threonine 82 contribute to the UDP-N-acetyl-alpha-D-glucosamine site. A Mg(2+)-binding site is contributed by aspartate 106. The UDP-N-acetyl-alpha-D-glucosamine site is built by glycine 143, glutamate 158, asparagine 173, and asparagine 227. Residue asparagine 227 participates in Mg(2+) binding. The segment at arginine 230 to alanine 250 is linker. Residues glycine 251–proline 621 form an N-acetyltransferase region. UDP-N-acetyl-alpha-D-glucosamine is bound by residues arginine 332 and lysine 350. Histidine 362 acts as the Proton acceptor in catalysis. Residues tyrosine 365 and asparagine 376 each contribute to the UDP-N-acetyl-alpha-D-glucosamine site. Acetyl-CoA contacts are provided by residues alanine 379, asparagine 385–tyrosine 386, alanine 422, and arginine 441. Residues alanine 601–proline 621 are disordered.

In the N-terminal section; belongs to the N-acetylglucosamine-1-phosphate uridyltransferase family. It in the C-terminal section; belongs to the transferase hexapeptide repeat family. Homotrimer. Requires Mg(2+) as cofactor.

The protein resides in the cytoplasm. The catalysed reaction is alpha-D-glucosamine 1-phosphate + acetyl-CoA = N-acetyl-alpha-D-glucosamine 1-phosphate + CoA + H(+). It carries out the reaction N-acetyl-alpha-D-glucosamine 1-phosphate + UTP + H(+) = UDP-N-acetyl-alpha-D-glucosamine + diphosphate. It functions in the pathway nucleotide-sugar biosynthesis; UDP-N-acetyl-alpha-D-glucosamine biosynthesis; N-acetyl-alpha-D-glucosamine 1-phosphate from alpha-D-glucosamine 6-phosphate (route II): step 2/2. It participates in nucleotide-sugar biosynthesis; UDP-N-acetyl-alpha-D-glucosamine biosynthesis; UDP-N-acetyl-alpha-D-glucosamine from N-acetyl-alpha-D-glucosamine 1-phosphate: step 1/1. Its pathway is bacterial outer membrane biogenesis; LPS lipid A biosynthesis. In terms of biological role, catalyzes the last two sequential reactions in the de novo biosynthetic pathway for UDP-N-acetylglucosamine (UDP-GlcNAc). The C-terminal domain catalyzes the transfer of acetyl group from acetyl coenzyme A to glucosamine-1-phosphate (GlcN-1-P) to produce N-acetylglucosamine-1-phosphate (GlcNAc-1-P), which is converted into UDP-GlcNAc by the transfer of uridine 5-monophosphate (from uridine 5-triphosphate), a reaction catalyzed by the N-terminal domain. The sequence is that of Bifunctional protein GlmU from Synechococcus sp. (strain JA-3-3Ab) (Cyanobacteria bacterium Yellowstone A-Prime).